Here is a 64-residue protein sequence, read N- to C-terminus: Large ribosomal subunit protein bL35 (64 aa).

The segment covering 1 to 15 (MPKQKSHSGASKRFR) has biased composition (basic residues). Residues 1-22 (MPKQKSHSGASKRFRVTGSGKV) form a disordered region.

This sequence belongs to the bacterial ribosomal protein bL35 family.

The protein is Large ribosomal subunit protein bL35 of Frankia casuarinae (strain DSM 45818 / CECT 9043 / HFP020203 / CcI3).